Consider the following 214-residue polypeptide: Ras-like protein 2 (214 aa).

Residues 19-24 (GVGKSC), 35-41 (VDEYDPT), 65-66 (AG), 122-125 (NKCD), and 152-154 (SAK) contribute to the GTP site. The short motif at 38-46 (YDPTIEDSY) is the Effector region element. The disordered stretch occupies residues 178 to 197 (QGYSTGSGGSNAGGPSNKME). Cysteine 211 carries the cysteine methyl ester modification. Cysteine 211 carries S-farnesyl cysteine lipidation. Positions 212–214 (VLM) are cleaved as a propeptide — removed in mature form.

It belongs to the small GTPase superfamily. Ras family. As to quaternary structure, interacts with farnesyltransferase beta subunit RAM1.

It is found in the cell membrane. With respect to regulation, alternates between an inactive form bound to GDP and an active form bound to GTP. Activated by a guanine nucleotide-exchange factor (GEF) and inactivated by a GTPase-activating protein (GAP). Functionally, modulates the activity of the adenylate cyclase catalytic subunit and therefore affects the biosynthesis of cyclic-AMP. Plays a role in both surface attachment and surface recognition of appressoria, a highly specialized infection structure for plant penetration. Regulates appressorium formation by coordinated regulation of cAMP signaling and Pmk1 MAPK pathways. The sequence is that of Ras-like protein 2 from Pyricularia oryzae (strain 70-15 / ATCC MYA-4617 / FGSC 8958) (Rice blast fungus).